Consider the following 490-residue polypeptide: Lysine--tRNA ligase (490 aa).

The Mg(2+) site is built by E398 and E405.

The protein belongs to the class-II aminoacyl-tRNA synthetase family. Homodimer. It depends on Mg(2+) as a cofactor.

It localises to the cytoplasm. It catalyses the reaction tRNA(Lys) + L-lysine + ATP = L-lysyl-tRNA(Lys) + AMP + diphosphate. The sequence is that of Lysine--tRNA ligase from Metamycoplasma arthritidis (strain 158L3-1) (Mycoplasma arthritidis).